Consider the following 221-residue polypeptide: Ribosomal RNA large subunit methyltransferase E (221 aa).

Residues Gly60, Trp62, Asp89, Asp105, and Asp134 each coordinate S-adenosyl-L-methionine. The active-site Proton acceptor is the Lys174. The tract at residues 199-221 (KPKASRDKSSETFLLGRQLKHPG) is disordered.

Belongs to the class I-like SAM-binding methyltransferase superfamily. RNA methyltransferase RlmE family.

It localises to the cytoplasm. It carries out the reaction uridine(2552) in 23S rRNA + S-adenosyl-L-methionine = 2'-O-methyluridine(2552) in 23S rRNA + S-adenosyl-L-homocysteine + H(+). Functionally, specifically methylates the uridine in position 2552 of 23S rRNA at the 2'-O position of the ribose in the fully assembled 50S ribosomal subunit. This chain is Ribosomal RNA large subunit methyltransferase E, found in Ralstonia pickettii (strain 12J).